A 986-amino-acid polypeptide reads, in one-letter code: Ephrin type-A receptor 4 (986 aa).

The first 19 residues, 1–19 (MAGIFYFALFSCLFGICDA), serve as a signal peptide directing secretion. The Extracellular segment spans residues 20-547 (VTGSRVYPAN…RIIGDGANST (528 aa)). Residues 30-209 (EVTLLDSRSV…FYKKCPLTVR (180 aa)) form the Eph LBD domain. Residues N235, N340, and N408 are each glycosylated (N-linked (GlcNAc...) asparagine). Fibronectin type-III domains lie at 328–439 (PPSA…TNQA) and 440–537 (APSS…TVPS). Residue N545 is glycosylated (N-linked (GlcNAc...) asparagine). A helical membrane pass occupies residues 548-569 (VLLVSVSGSVVLVVILIAAFVI). Residues 570–986 (SRRRSKYSKA…QQMHGRMVPV (417 aa)) are Cytoplasmic-facing. Phosphotyrosine; by autocatalysis is present on residues Y596 and Y602. The Protein kinase domain occupies 621 to 882 (IKIEKVIGVG…QIVNMLDKLI (262 aa)). ATP-binding positions include 627 to 635 (IGVGEFGEV) and K653. The active-site Proton acceptor is D746. A phosphotyrosine; by autocatalysis mark is found at Y779 and Y928. Positions 911 to 975 (SAVVSVGDWL…LSSVQAMRTQ (65 aa)) constitute an SAM domain. Positions 984–986 (VPV) match the PDZ-binding motif.

Belongs to the protein kinase superfamily. Tyr protein kinase family. Ephrin receptor subfamily. In terms of assembly, heterotetramer upon binding of the ligand. The heterotetramer is composed of an ephrin dimer and a receptor dimer. Oligomerization is probably required to induce biological responses. Interacts (phosphorylated at position Tyr-602) with FYN. Interacts with CDK5, CDK5R1 and NGEF; upon activation by EFNA1 induces NGEF phosphorylation by the kinase CDK5. Interacts with CHN1; effector of EPHA4 in axon guidance linking EPHA4 activation to RAC1 regulation. Interacts (via PDZ motif) with SIPA1L1 (via PDZ domain); controls neuronal morphology through regulation of the RAP1 (RAP1A or RAP1B) and RAP2 (RAP2A, RAP2B or RAP2C) GTPases. Forms a ternary complex composed of ADAM10, CADH1 and EPHA4; within the complex, CADH1 is cleaved by ADAM10 which disrupts adherens junctions. As to expression, ubiquitous.

It localises to the cell membrane. Its subcellular location is the cell projection. It is found in the axon. The protein localises to the dendrite. The protein resides in the postsynaptic density membrane. It localises to the early endosome. Its subcellular location is the cell junction. It is found in the adherens junction. The enzyme catalyses L-tyrosyl-[protein] + ATP = O-phospho-L-tyrosyl-[protein] + ADP + H(+). Receptor tyrosine kinase which binds membrane-bound ephrin family ligands residing on adjacent cells, leading to contact-dependent bidirectional signaling into neighboring cells. The signaling pathway downstream of the receptor is referred to as forward signaling while the signaling pathway downstream of the ephrin ligand is referred to as reverse signaling. Highly promiscuous, it has the unique property among Eph receptors to bind and to be physiologically activated by both GPI-anchored ephrin-A and transmembrane ephrin-B ligands including EFNA1 and EFNB3. Upon activation by ephrin ligands, modulates cell morphology and integrin-dependent cell adhesion through regulation of the Rac, Rap and Rho GTPases activity. Plays an important role in the development of the nervous system controlling different steps of axonal guidance including the establishment of the corticospinal projections. May also control the segregation of motor and sensory axons during neuromuscular circuit development. In addition to its role in axonal guidance plays a role in synaptic plasticity. Activated by EFNA1 phosphorylates CDK5 at 'Tyr-15' which in turn phosphorylates NGEF regulating RHOA and dendritic spine morphogenesis. In the nervous system, also plays a role in repair after injury preventing axonal regeneration and in angiogenesis playing a role in central nervous system vascular formation. Additionally, its promiscuity makes it available to participate in a variety of cell-cell signaling regulating for instance the development of the thymic epithelium. During development of the cochlear organ of Corti, regulates pillar cell separation by forming a ternary complex with ADAM10 and CADH1 which facilitates the cleavage of CADH1 by ADAM10 and disruption of adherens junctions. Phosphorylates CAPRIN1, promoting CAPRIN1-dependent formation of a membraneless compartment. The protein is Ephrin type-A receptor 4 (EPHA4) of Homo sapiens (Human).